Here is a 161-residue protein sequence, read N- to C-terminus: Allophycocyanin alpha-B chain (161 aa).

Residue Asn-71 is modified to N4-methylasparagine. A (2R,3E)-phycocyanobilin-binding site is contributed by Cys-81.

The protein belongs to the phycobiliprotein family. Post-translationally, contains one covalently linked bilin chromophore.

Its subcellular location is the plastid. It is found in the chloroplast thylakoid membrane. Functionally, allophycocyanin is a photosynthetic bile pigment-protein complex with maximum absorption at approximately 650 nanometers. The chain is Allophycocyanin alpha-B chain (apcD) from Pyropia yezoensis (Susabi-nori).